We begin with the raw amino-acid sequence, 170 residues long: Peptide deformylase (170 aa).

Residues cysteine 93 and histidine 135 each contribute to the Fe cation site. Residue glutamate 136 is part of the active site. Fe cation is bound at residue histidine 139.

It belongs to the polypeptide deformylase family. Fe(2+) is required as a cofactor.

The enzyme catalyses N-terminal N-formyl-L-methionyl-[peptide] + H2O = N-terminal L-methionyl-[peptide] + formate. Functionally, removes the formyl group from the N-terminal Met of newly synthesized proteins. Requires at least a dipeptide for an efficient rate of reaction. N-terminal L-methionine is a prerequisite for activity but the enzyme has broad specificity at other positions. This Acidobacterium capsulatum (strain ATCC 51196 / DSM 11244 / BCRC 80197 / JCM 7670 / NBRC 15755 / NCIMB 13165 / 161) protein is Peptide deformylase.